Reading from the N-terminus, the 104-residue chain is MSDRKLSTREDADVLLEEELKEPRRFRVLLHNDDYTSMDFVVAVLIDIFRKSREQAMSIMLSVHEKGIGVCGVYTAEVAETKVAMVHARARAEGFPLRCSMEEV.

The protein belongs to the ClpS family. As to quaternary structure, binds to the N-terminal domain of the chaperone ClpA.

Its function is as follows. Involved in the modulation of the specificity of the ClpAP-mediated ATP-dependent protein degradation. This is ATP-dependent Clp protease adapter protein ClpS from Oleidesulfovibrio alaskensis (strain ATCC BAA-1058 / DSM 17464 / G20) (Desulfovibrio alaskensis).